Here is a 547-residue protein sequence, read N- to C-terminus: Chaperonin GroEL (547 aa).

ATP contacts are provided by residues 30–33 (TLGP), K51, 87–91 (DGTTT), G415, 479–481 (NAA), and D495. The disordered stretch occupies residues 526 to 547 (KEEKSDLSVPPQGGMGGMGGMM). The segment covering 538 to 547 (GGMGGMGGMM) has biased composition (gly residues).

This sequence belongs to the chaperonin (HSP60) family. Forms a cylinder of 14 subunits composed of two heptameric rings stacked back-to-back. Interacts with the co-chaperonin GroES.

It localises to the cytoplasm. The enzyme catalyses ATP + H2O + a folded polypeptide = ADP + phosphate + an unfolded polypeptide.. In terms of biological role, together with its co-chaperonin GroES, plays an essential role in assisting protein folding. The GroEL-GroES system forms a nano-cage that allows encapsulation of the non-native substrate proteins and provides a physical environment optimized to promote and accelerate protein folding. In Buchnera aphidicola subsp. Tetraneura caerulescens, this protein is Chaperonin GroEL.